The sequence spans 706 residues: Phenylalanine--tRNA ligase beta subunit, chloroplastic (706 aa).

In terms of domain architecture, B5 spans 300–388; that stretch reads KVLKPIVLNY…RLHGFNNFLT (89 aa). Residues aspartate 366, aspartate 372, glutamate 375, and glutamate 376 each contribute to the Mg(2+) site. Residues 612 to 705 form the FDX-ACB domain; sequence SVYPKIVKDL…LELKVQAILR (94 aa).

Belongs to the phenylalanyl-tRNA synthetase beta subunit family. Type 1 subfamily. In terms of assembly, tetramer of two alpha and two beta subunits. Mg(2+) is required as a cofactor.

The protein localises to the plastid. The protein resides in the chloroplast. The enzyme catalyses tRNA(Phe) + L-phenylalanine + ATP = L-phenylalanyl-tRNA(Phe) + AMP + diphosphate + H(+). The sequence is that of Phenylalanine--tRNA ligase beta subunit, chloroplastic from Phaeodactylum tricornutum (strain CCAP 1055/1).